The primary structure comprises 324 residues: Ribosomal RNA small subunit methyltransferase H (324 aa).

S-adenosyl-L-methionine is bound by residues 40 to 42 (AGH), Asp60, Leu94, Asp108, and His115. Residues 301 to 324 (EEMKVNTRSRSAKLRVAERTGEDG) are disordered. The segment covering 315 to 324 (RVAERTGEDG) has biased composition (basic and acidic residues).

This sequence belongs to the methyltransferase superfamily. RsmH family.

Its subcellular location is the cytoplasm. It catalyses the reaction cytidine(1402) in 16S rRNA + S-adenosyl-L-methionine = N(4)-methylcytidine(1402) in 16S rRNA + S-adenosyl-L-homocysteine + H(+). Specifically methylates the N4 position of cytidine in position 1402 (C1402) of 16S rRNA. The polypeptide is Ribosomal RNA small subunit methyltransferase H (Maridesulfovibrio salexigens (strain ATCC 14822 / DSM 2638 / NCIMB 8403 / VKM B-1763) (Desulfovibrio salexigens)).